A 1128-amino-acid chain; its full sequence is Glutamate receptor-interacting protein 1 (1128 aa).

Serine 43 carries the phosphoserine modification. 6 consecutive PDZ domains span residues 53-136 (VVEL…EYEL), 150-238 (TVEV…EYDV), 252-336 (LVEV…LPHH), 472-561 (EVVL…EFDV), 573-658 (HVKL…RKDE), and 673-755 (TVEL…KKQT). Disordered regions lie at residues 754-798 (QTDA…YPST) and 935-981 (MSLN…GRKS). The span at 944–974 (PRSQLGRQASFQERSSSRPHYSQTTRSNTLP) shows a compositional bias: polar residues. The 83-residue stretch at 1004–1086 (KVTLYKDSDM…KLDLVISRNP (83 aa)) folds into the PDZ 7 domain. Residues 1093–1115 (IDQQSLPGDWSEQNSAFFQQPSH) are compositionally biased toward polar residues. Residues 1093-1128 (IDQQSLPGDWSEQNSAFFQQPSHGGNLETREPTNTL) form a disordered region.

Interacts with EPHA7, EPHB2, KIF5A, KIF5B, KIF5C, GRIA2, GRIA3, GRIPAP1/GRASP1, PPFIA1, PPFIA4, FRAS1, PLCD4, PTPRF and liprins-alpha. Can form homomultimers or heteromultimers with GRIP2. Forms a ternary complex with GRIA2 and CSPG4. Interacts with ATAD1 in an ATP-dependent manner. ATAD1-catalyzed ATP hydrolysis disrupts binding to ATAD1 and to GRIA2 and leads to AMPAR complex disassembly. Interacts with EFNB1, EFNB3 and the C-terminal tail of PRLHR. Interacts with SLC30A9. Interacts with BUD23. Forms a complex with NSG1, GRIA2 and STX12; controls the intracellular fate of AMPAR and the endosomal sorting of the GRIA2 subunit toward recycling and membrane targeting. Interacts with NSG1.

The protein resides in the cytoplasmic vesicle. It localises to the perikaryon. Its subcellular location is the cell projection. The protein localises to the dendrite. It is found in the cytoplasm. The protein resides in the endomembrane system. It localises to the postsynaptic cell membrane. Its subcellular location is the postsynaptic density. The protein localises to the endoplasmic reticulum membrane. In terms of biological role, may play a role as a localized scaffold for the assembly of a multiprotein signaling complex and as mediator of the trafficking of its binding partners at specific subcellular location in neurons. Through complex formation with NSG1, GRIA2 and STX12 controls the intracellular fate of AMPAR and the endosomal sorting of the GRIA2 subunit toward recycling and membrane targeting. This Homo sapiens (Human) protein is Glutamate receptor-interacting protein 1 (GRIP1).